A 415-amino-acid chain; its full sequence is MDDIKNLIEDLLGGDTVFNNTKILNPEYIPSNLPHRENQIKEMTVSFRDLILNPGSSSIRLVIIGRTGTGKSVTTKKFGLKLREIAHERNLRLEYVHVNCHRQRTLYLILQEISQGLRLQLPNRGLSSQETFRIIYDYLEKRNIHLVITLDEFDYFVSTAPLEDIYFLVRVYDELNVTTKRLHYIFIVREITSLSGLDKSIKDHIIKNIIDFPPYKSTELYDILADRVYNEKAFKENSVSEDVLRFIAEVHGFDKGGSGNARISIETLELAGKIADSENSPIVTLEHAKKANSKINPELSALIDSIKELDLHQLIFLKALVLLHDQEGIDFFPIGKIEQRYVELSKNFGEEPRRHTQIFEYVRRMKLMGLINTRQSGRGMRGRTTLVSLPIPISMEFKDLINTEIRKRLEQSRIS.

Residues 69-73 (TGKSV), Y215, and R227 each bind ATP.

This sequence belongs to the CDC6/cdc18 family.

Functionally, involved in regulation of DNA replication. The protein is ORC1-type DNA replication protein 2 (cdc6-2) of Sulfolobus acidocaldarius (strain ATCC 33909 / DSM 639 / JCM 8929 / NBRC 15157 / NCIMB 11770).